The primary structure comprises 39 residues: GWLKKIGKKIGRVGQHTRDATIQGLAVAQQAANVAATAR.

The protein resides in the secreted. In terms of biological role, antibacterial peptide active against Gram-negative bacterium E.coli. Has no activity against Gram-positive bacterium M.luteus. Weakly active against M.luteus. The polypeptide is Cecropin (Calliphora vicina (Blue blowfly)).